The following is a 352-amino-acid chain: Macrophage-capping protein (352 aa).

The residue at position 1 (M1) is an N-acetylmethionine. The Gelsolin-like 1 repeat unit spans residues E27–G75. A Nuclear localization signal motif is present at residues R139–K148. Gelsolin-like repeat units follow at residues I150–N190 and M265–Q311. S341 bears the Phosphoserine mark.

The protein belongs to the villin/gelsolin family. In terms of assembly, interacts with NUP62. Interacts with NUTF2 and RAN; involved in CAPG nuclear import. In terms of processing, phosphorylated. Nuclear GCAP39 is more highly phosphorylated than cytoplasmic GCAP39. Present in a large variety of tissues and is particularly abundant in kidney and lung. Highly expressed in macrophages (at protein level).

The protein localises to the nucleus. It localises to the cytoplasm. The protein resides in the melanosome. It is found in the cell projection. Its subcellular location is the lamellipodium. The protein localises to the ruffle. In terms of biological role, calcium-sensitive protein which reversibly blocks the barbed ends of actin filaments but does not sever preformed actin filaments. May play an important role in macrophage function. May play a role in regulating cytoplasmic and/or nuclear structures through potential interactions with actin. May bind DNA. Uncapping occurs either when Ca(2+) falls or when the concentration of polyphosphoinositide rises, both at low and high Ca(2+). This chain is Macrophage-capping protein (Capg), found in Mus musculus (Mouse).